The chain runs to 122 residues: Large ribosomal subunit protein bL12 (122 aa).

Belongs to the bacterial ribosomal protein bL12 family. In terms of assembly, homodimer. Part of the ribosomal stalk of the 50S ribosomal subunit. Forms a multimeric L10(L12)X complex, where L10 forms an elongated spine to which 2 to 4 L12 dimers bind in a sequential fashion. Binds GTP-bound translation factors.

Its function is as follows. Forms part of the ribosomal stalk which helps the ribosome interact with GTP-bound translation factors. Is thus essential for accurate translation. This chain is Large ribosomal subunit protein bL12, found in Xanthomonas oryzae pv. oryzae (strain MAFF 311018).